Consider the following 285-residue polypeptide: Putative ABC transporter ATP-binding protein CPE0195 (285 aa).

One can recognise an ABC transporter domain in the interval 6-242 (LKVEELNYNY…KEVIRKVNLR (237 aa)). Residue 39–46 (GGNGVGKS) coordinates ATP.

It belongs to the ABC transporter superfamily.

The protein localises to the cell membrane. In terms of biological role, probably part of an ABC transporter complex. Responsible for energy coupling to the transport system. In Clostridium perfringens (strain 13 / Type A), this protein is Putative ABC transporter ATP-binding protein CPE0195.